The following is a 268-amino-acid chain: F-actin-capping protein subunit beta (268 aa).

The protein belongs to the F-actin-capping protein beta subunit family. As to quaternary structure, component of the F-actin capping complex, composed of a heterodimer of an alpha and a beta subunit.

The protein localises to the cytoplasm. It is found in the cytoskeleton. It localises to the actin patch. Its subcellular location is the nucleus. In terms of biological role, F-actin-capping proteins bind in a Ca(2+)-independent manner to the fast growing ends of actin filaments (barbed end) thereby blocking the exchange of subunits at these ends. Unlike other capping proteins (such as gelsolin and severin), these proteins do not sever actin filaments. Competes with formin cdc12 for attachment to the actin filaments barbed ends. Slowly replaces cdc12 on the barbed ends in preparation for filament disassembly during contractile ring constriction. This is F-actin-capping protein subunit beta (acp2) from Schizosaccharomyces pombe (strain 972 / ATCC 24843) (Fission yeast).